A 182-amino-acid chain; its full sequence is uncharacterized protein (182 aa).

It belongs to the mimivirus L28/L54 family.

This is an uncharacterized protein from Acanthamoeba polyphaga (Amoeba).